A 70-amino-acid polypeptide reads, in one-letter code: Melittin-N (70 aa).

Residues 1–21 (MKFLVNVALVFMVVYISYIYA) form the signal peptide. Residues 22–43 (APEPEPAPEPEAEADAEADPEA) constitute a propeptide, removed by a dipeptidylpeptidase. Gly44 is modified (N-formylglycine; partial). A Glutamine amide modification is found at Gln69.

Belongs to the melittin family. In terms of assembly, monomer (in solution and for integration into membranes), homotetramer (in solution and potentially as a toroidal pore in membranes), and potenially homomultimer (as a toroidal pore in membranes). As to expression, expressed by the venom gland.

Its subcellular location is the secreted. The protein resides in the target cell membrane. Its function is as follows. Main toxin of bee venom with strong hemolytic activity and antimicrobial activity. It has enhancing effects on bee venom phospholipase A2 activity. This amphipathic toxin binds to negatively charged membrane surface and forms pore by inserting into lipid bilayers inducing the leakage of ions and molecules and the enhancement of permeability that ultimately leads to cell lysis. It acts as a voltage-gated pore with higher selectivity for anions over cations. The ion conductance has been shown to be voltage-dependent. Self-association of melittin in membranes is promoted by high ionic strength, but not by the presence of negatively charged lipids. In vivo, intradermal injection into healthy human volunteers produce sharp pain sensation and an inflammatory response. It produces pain by activating primary nociceptor cells directly and indirectly due to its ability to activate plasma membrane phospholipase A2 and its pore-forming activity. Shows lower cytotoxicity when tested on E.coli and cancer cell lines than melittin, as well as lower anti-inflammatory properties and lower properties to interact to small unilamellar liposomes. The polypeptide is Melittin-N (MELT) (Apis cerana (Indian honeybee)).